Here is a 497-residue protein sequence, read N- to C-terminus: MNQVLLEMRGITKTFPGVKALDNVQLTLKKGRVMALMGENGAGKSTLMKVLFGIYQRDCGTIRYQGEQVNYSGAKEALEAGVSMIHQELSPILHRSIAENIWLGREPLKGPLRLIDHAKMYRDTTELLKKLDLHLDPRTPMSELTVATMQMIEISKAISYNSKIIIMDEPTSALTGKEVDHLFEIIEKLKKQGVSIVYISHKMDEIFRICDDITVFRDGCYIGEREAQNTNHDELVQMMVGRDLGDVFPPPTAKPGKVRLEVKNLSVEGVFDNISFKLHEGEILGIAGLVGAGRTELIETLFGVRKHDVGEIWINGENVEIKTPQDAISHKMAFLTEDRRQSGLYLMLDIFANTSIAHLDAYRNKVVNVLDVRSMQKDCASQCTKLKVKTPGMAEKIDNLSGGNQQKVLLARWMLTKPDILFLDEPTRGIDIGAKSEIYKLMRLLTGMGKSLVMISSELPEVIGMSDRILVMHGGKLKGELDGKDASQQQVMSMAFN.

ABC transporter domains follow at residues 6-243 (LEMR…VGRD) and 256-494 (GKVR…VMSM). 38 to 45 (GENGAGKS) contributes to the ATP binding site.

It belongs to the ABC transporter superfamily. Galactose/methyl galactoside importer (TC 3.A.1.2.3) family. The complex is composed of one ATP-binding protein (MglA), two transmembrane proteins (MglC) and a solute-binding protein (MglB).

The protein localises to the cell inner membrane. It catalyses the reaction D-galactose(out) + ATP + H2O = D-galactose(in) + ADP + phosphate + H(+). It carries out the reaction methyl beta-D-galactoside(out) + ATP + H2O = methyl beta-D-galactoside(in) + ADP + phosphate + H(+). Part of the ABC transporter complex MglABC involved in galactose/methyl galactoside import. Responsible for energy coupling to the transport system. The polypeptide is Galactose/methyl galactoside import ATP-binding protein MglA 1 (Photobacterium profundum (strain SS9)).